Consider the following 356-residue polypeptide: Fructose-1,6-bisphosphatase class 1 1 (356 aa).

Mg(2+) is bound by residues Glu106, Asp129, Leu131, and Asp132. Substrate-binding positions include 132–135 (DGSS), Asn225, Tyr258, and Lys288. Residue Glu294 participates in Mg(2+) binding.

The protein belongs to the FBPase class 1 family. Homotetramer. Mg(2+) is required as a cofactor.

Its subcellular location is the cytoplasm. The catalysed reaction is beta-D-fructose 1,6-bisphosphate + H2O = beta-D-fructose 6-phosphate + phosphate. It functions in the pathway carbohydrate biosynthesis; gluconeogenesis. This Salinibacter ruber (strain DSM 13855 / M31) protein is Fructose-1,6-bisphosphatase class 1 1.